The primary structure comprises 169 residues: 3-hydroxyacyl-[acyl-carrier-protein] dehydratase FabZ (169 aa).

The active site involves histidine 74.

It belongs to the thioester dehydratase family. FabZ subfamily.

Its subcellular location is the cytoplasm. It carries out the reaction a (3R)-hydroxyacyl-[ACP] = a (2E)-enoyl-[ACP] + H2O. In terms of biological role, involved in unsaturated fatty acids biosynthesis. Catalyzes the dehydration of short chain beta-hydroxyacyl-ACPs and long chain saturated and unsaturated beta-hydroxyacyl-ACPs. The polypeptide is 3-hydroxyacyl-[acyl-carrier-protein] dehydratase FabZ (Gluconobacter oxydans (strain 621H) (Gluconobacter suboxydans)).